A 692-amino-acid chain; its full sequence is UvrABC system protein B (692 aa).

One can recognise a Helicase ATP-binding domain in the interval 32-418; the sequence is DNIENGEKAQ…QTDTIVEQII (387 aa). 45–52 is an ATP binding site; sequence GATGTGKT. The Beta-hairpin motif lies at 98–121; sequence YYDYYQPEAYVPSSDTYIEKDSSV. Residues 436-631 form the Helicase C-terminal domain; that stretch reads QIDDLVGEIH…TIKKEIRDLI (196 aa). A UVR domain is found at 656–691; it reads KALVKKLEKEMQQAASALDFEGAAQLRDMVLELRAM.

It belongs to the UvrB family. In terms of assembly, forms a heterotetramer with UvrA during the search for lesions. Interacts with UvrC in an incision complex.

It is found in the cytoplasm. The UvrABC repair system catalyzes the recognition and processing of DNA lesions. A damage recognition complex composed of 2 UvrA and 2 UvrB subunits scans DNA for abnormalities. Upon binding of the UvrA(2)B(2) complex to a putative damaged site, the DNA wraps around one UvrB monomer. DNA wrap is dependent on ATP binding by UvrB and probably causes local melting of the DNA helix, facilitating insertion of UvrB beta-hairpin between the DNA strands. Then UvrB probes one DNA strand for the presence of a lesion. If a lesion is found the UvrA subunits dissociate and the UvrB-DNA preincision complex is formed. This complex is subsequently bound by UvrC and the second UvrB is released. If no lesion is found, the DNA wraps around the other UvrB subunit that will check the other stand for damage. In Lactococcus lactis subsp. lactis (strain IL1403) (Streptococcus lactis), this protein is UvrABC system protein B.